Consider the following 251-residue polypeptide: Small ribosomal subunit protein uS2 (251 aa).

The protein belongs to the universal ribosomal protein uS2 family.

In Synechococcus elongatus (strain ATCC 33912 / PCC 7942 / FACHB-805) (Anacystis nidulans R2), this protein is Small ribosomal subunit protein uS2.